The sequence spans 237 residues: Leucyl/phenylalanyl-tRNA--protein transferase (237 aa).

The protein belongs to the L/F-transferase family.

The protein resides in the cytoplasm. It carries out the reaction N-terminal L-lysyl-[protein] + L-leucyl-tRNA(Leu) = N-terminal L-leucyl-L-lysyl-[protein] + tRNA(Leu) + H(+). The catalysed reaction is N-terminal L-arginyl-[protein] + L-leucyl-tRNA(Leu) = N-terminal L-leucyl-L-arginyl-[protein] + tRNA(Leu) + H(+). It catalyses the reaction L-phenylalanyl-tRNA(Phe) + an N-terminal L-alpha-aminoacyl-[protein] = an N-terminal L-phenylalanyl-L-alpha-aminoacyl-[protein] + tRNA(Phe). Its function is as follows. Functions in the N-end rule pathway of protein degradation where it conjugates Leu, Phe and, less efficiently, Met from aminoacyl-tRNAs to the N-termini of proteins containing an N-terminal arginine or lysine. The protein is Leucyl/phenylalanyl-tRNA--protein transferase of Shewanella baltica (strain OS185).